The sequence spans 421 residues: Glucose-1-phosphate adenylyltransferase (421 aa).

Alpha-D-glucose 1-phosphate is bound by residues Tyr108, Gly173, 188-189 (EK), and Ser206.

Belongs to the bacterial/plant glucose-1-phosphate adenylyltransferase family. As to quaternary structure, homotetramer.

It carries out the reaction alpha-D-glucose 1-phosphate + ATP + H(+) = ADP-alpha-D-glucose + diphosphate. The protein operates within glycan biosynthesis; glycogen biosynthesis. Functionally, involved in the biosynthesis of ADP-glucose, a building block required for the elongation reactions to produce glycogen. Catalyzes the reaction between ATP and alpha-D-glucose 1-phosphate (G1P) to produce pyrophosphate and ADP-Glc. This chain is Glucose-1-phosphate adenylyltransferase, found in Mesorhizobium japonicum (strain LMG 29417 / CECT 9101 / MAFF 303099) (Mesorhizobium loti (strain MAFF 303099)).